Reading from the N-terminus, the 527-residue chain is DNA polymerase epsilon subunit 2 (527 aa).

Belongs to the DNA polymerase epsilon subunit B family. Component of the DNA polymerase epsilon complex consisting of four subunits: the catalytic subunit POLE and the accessory subunits POLE2, POLE3 and POLE4.

It is found in the nucleus. In terms of biological role, accessory component of the DNA polymerase epsilon complex. Participates in DNA repair and in chromosomal DNA replication. The sequence is that of DNA polymerase epsilon subunit 2 from Homo sapiens (Human).